A 311-amino-acid chain; its full sequence is Methionyl-tRNA formyltransferase (311 aa).

110 to 113 (SLLP) contributes to the (6S)-5,6,7,8-tetrahydrofolate binding site.

It belongs to the Fmt family.

It carries out the reaction L-methionyl-tRNA(fMet) + (6R)-10-formyltetrahydrofolate = N-formyl-L-methionyl-tRNA(fMet) + (6S)-5,6,7,8-tetrahydrofolate + H(+). Attaches a formyl group to the free amino group of methionyl-tRNA(fMet). The formyl group appears to play a dual role in the initiator identity of N-formylmethionyl-tRNA by promoting its recognition by IF2 and preventing the misappropriation of this tRNA by the elongation apparatus. In Streptococcus pyogenes serotype M12 (strain MGAS2096), this protein is Methionyl-tRNA formyltransferase.